A 456-amino-acid chain; its full sequence is Nitrogenase molybdenum-iron protein beta chain (456 aa).

The [8Fe-7S] cluster site is built by C23, C48, C106, and S141.

Belongs to the NifD/NifK/NifE/NifN family. In terms of assembly, tetramer of two alpha and two beta chains. Forms complex with the iron protein (nitrogenase component 2). [8Fe-7S] cluster is required as a cofactor.

The catalysed reaction is N2 + 8 reduced [2Fe-2S]-[ferredoxin] + 16 ATP + 16 H2O = H2 + 8 oxidized [2Fe-2S]-[ferredoxin] + 2 NH4(+) + 16 ADP + 16 phosphate + 6 H(+). In terms of biological role, this molybdenum-iron protein is part of the nitrogenase complex that catalyzes the key enzymatic reactions in nitrogen fixation. This is Nitrogenase molybdenum-iron protein beta chain (nifK2) from Methanosarcina barkeri.